A 362-amino-acid chain; its full sequence is Putative F-box/kelch-repeat protein At3g20710 (362 aa).

Residues 1–50 (MMMSNLPKDLVEEILSRVPFKYLRAIRSTCKNWYDLSKNRSFANKNIDKA) enclose the F-box domain. 2 Kelch repeats span residues 150-201 (YDKS…VSLN) and 293-341 (IYCR…YFKS).

This is Putative F-box/kelch-repeat protein At3g20710 from Arabidopsis thaliana (Mouse-ear cress).